Here is a 431-residue protein sequence, read N- to C-terminus: Protein cereblon (431 aa).

Positions methionine 1–asparagine 36 are disordered. A compositionally biased stretch (acidic residues) spans glutamate 10–aspartate 28. The region spanning leucine 69 to threonine 309 is the Lon N-terminal domain. Residues cysteine 308–isoleucine 416 enclose the CULT domain. Residues cysteine 313 and cysteine 316 each coordinate Zn(2+). Residues histidine 368, tryptophan 370, and tryptophan 376 each coordinate (S)-thalidomide. Cysteine 381 and cysteine 384 together coordinate Zn(2+).

It belongs to the CRBN family. Component of a DCX (DDB1-CUL4-X-box) protein ligase complex. As to expression, highly expressed in brain, head, vasculature otic vesicles and developing pectoral fins.

It is found in the cytoplasm. The protein localises to the nucleus. Its pathway is protein modification; protein ubiquitination. Its function is as follows. Substrate recognition component of a DCX (DDB1-CUL4-X-box) E3 protein ligase complex that mediates the ubiquitination and subsequent proteasomal degradation of target proteins, such as MEIS2. Normal degradation of key regulatory proteins is required for normal limb outgrowth and expression of the fibroblast growth factor FGF8. Maintains presynaptic glutamate release and consequently cognitive functions, such as memory and learning, by negatively regulating large-conductance calcium-activated potassium (BK) channels in excitatory neurons. Likely to function by regulating the assembly and neuronal surface expression of BK channels via its interaction with KCNT1. May also be involved in regulating anxiety-like behaviors via a BK channel-independent mechanism. This Danio rerio (Zebrafish) protein is Protein cereblon (crbn).